Here is a 1070-residue protein sequence, read N- to C-terminus: DNA-directed RNA polymerase subunit beta (1070 aa).

Belongs to the RNA polymerase beta chain family. In terms of assembly, in plastids the minimal PEP RNA polymerase catalytic core is composed of four subunits: alpha, beta, beta', and beta''. When a (nuclear-encoded) sigma factor is associated with the core the holoenzyme is formed, which can initiate transcription.

The protein resides in the plastid. It localises to the chloroplast. The catalysed reaction is RNA(n) + a ribonucleoside 5'-triphosphate = RNA(n+1) + diphosphate. Functionally, DNA-dependent RNA polymerase catalyzes the transcription of DNA into RNA using the four ribonucleoside triphosphates as substrates. This chain is DNA-directed RNA polymerase subunit beta, found in Nicotiana sylvestris (Wood tobacco).